A 390-amino-acid polypeptide reads, in one-letter code: Zinc transporter 7 (390 aa).

Topologically, residues M1–N37 are cytoplasmic. A helical membrane pass occupies residues L38 to W58. Residues S59 to D67 are Lumenal-facing. The chain crosses the membrane as a helical span at residues S68 to S88. The Cytoplasmic segment spans residues R89–R102. Residues A103 to F123 form a helical membrane-spanning segment. The Lumenal portion of the chain corresponds to S124 to R140. The chain crosses the membrane as a helical span at residues L141–H161. The his-rich loop stretch occupies residues H161–H226. The Cytoplasmic segment spans residues G162 to G250. A disordered region spans residues H167–S243. The span at H177–H186 shows a compositional bias: low complexity. A compositionally biased stretch (basic residues) spans G187–H208. 2 stretches are compositionally biased toward basic and acidic residues: residues S209–H222 and C232–G242. Residues V251–L271 traverse the membrane as a helical segment. Over M272–G276 the chain is Lumenal. Residues L277–I297 form a helical membrane-spanning segment. Topologically, residues P298–M390 are cytoplasmic.

It belongs to the cation diffusion facilitator (CDF) transporter (TC 2.A.4) family. SLC30A subfamily. In terms of assembly, homooligomer.

The protein resides in the golgi apparatus membrane. It localises to the cytoplasmic vesicle. The protein localises to the golgi apparatus. Its subcellular location is the trans-Golgi network. It is found in the sarcoplasmic reticulum. The protein resides in the mitochondrion. It catalyses the reaction Zn(2+)(in) = Zn(2+)(out). Its function is as follows. Zinc ion transporter mediating zinc entry from the cytosol into the lumen of organelles along the secretory pathway. By contributing to zinc ion homeostasis within the early secretory pathway, regulates the activation and folding of enzymes like alkaline phosphatases. In Xenopus tropicalis (Western clawed frog), this protein is Zinc transporter 7 (slc30a7).